Consider the following 234-residue polypeptide: t-SNARE protein aex-4 (234 aa).

2 consecutive t-SNARE coiled-coil homology domains span residues 37–99 and 170–232; these read AKLN…ITAM and DAIE…VKKL.

This sequence belongs to the SNAP-25 family. Expressed in intestinal cells.

Its subcellular location is the cell membrane. Functionally, t-SNARE protein which regulates the secretion of aex-5 from intestinal cells. Involved in the defecation motor program, which is a coordinated series of three muscle contractions that occurs every 45 seconds. The polypeptide is t-SNARE protein aex-4 (Caenorhabditis elegans).